A 672-amino-acid polypeptide reads, in one-letter code: Poly-beta-1,6-N-acetyl-D-glucosamine N-deacetylase (672 aa).

A signal peptide spans methionine 1–alanine 20. The N-palmitoyl cysteine moiety is linked to residue cysteine 21. The S-diacylglycerol cysteine moiety is linked to residue cysteine 21. Residues lysine 107–serine 349 form the NodB homology domain.

It belongs to the polysaccharide deacetylase family.

The protein resides in the cell outer membrane. Catalyzes the N-deacetylation of poly-beta-1,6-N-acetyl-D-glucosamine (PGA), a biofilm adhesin polysaccharide. N-deacetylation promotes PGA export through the PgaA porin. The sequence is that of Poly-beta-1,6-N-acetyl-D-glucosamine N-deacetylase (pgaB) from Escherichia coli O157:H7.